The sequence spans 186 residues: MKMIVGLGNIGTRYDETRHNAGFMVVEQLARDFHLGAFTHEKVEAVTVTGLINGQKVMLVKPTTFMNESGRAVKPLMEYYDIALDDLIVVSDDLDMPVGKIKLKQRGASGGHNGLKSLIDHLGTREFNRVKLGIDHPKFGSVVSHVLGRFDTEERPVFEGAVLQAEQALIKWVQGTSFDQLMNEYN.

Y14 provides a ligand contact to tRNA. H19 acts as the Proton acceptor in catalysis. TRNA contacts are provided by F65, N67, and N113.

This sequence belongs to the PTH family. In terms of assembly, monomer.

It is found in the cytoplasm. It carries out the reaction an N-acyl-L-alpha-aminoacyl-tRNA + H2O = an N-acyl-L-amino acid + a tRNA + H(+). Hydrolyzes ribosome-free peptidyl-tRNAs (with 1 or more amino acids incorporated), which drop off the ribosome during protein synthesis, or as a result of ribosome stalling. Its function is as follows. Catalyzes the release of premature peptidyl moieties from peptidyl-tRNA molecules trapped in stalled 50S ribosomal subunits, and thus maintains levels of free tRNAs and 50S ribosomes. This is Peptidyl-tRNA hydrolase from Limosilactobacillus fermentum (strain NBRC 3956 / LMG 18251) (Lactobacillus fermentum).